Reading from the N-terminus, the 527-residue chain is Peptide chain release factor 3 (527 aa).

The tr-type G domain maps to N9 to Q278. Residues S18 to T25, D86 to H90, and N140 to D143 contribute to the GTP site.

It belongs to the TRAFAC class translation factor GTPase superfamily. Classic translation factor GTPase family. PrfC subfamily.

Its subcellular location is the cytoplasm. Its function is as follows. Increases the formation of ribosomal termination complexes and stimulates activities of RF-1 and RF-2. It binds guanine nucleotides and has strong preference for UGA stop codons. It may interact directly with the ribosome. The stimulation of RF-1 and RF-2 is significantly reduced by GTP and GDP, but not by GMP. The sequence is that of Peptide chain release factor 3 from Haemophilus influenzae (strain PittEE).